We begin with the raw amino-acid sequence, 160 residues long: tRNA (cytidine(34)-2'-O)-methyltransferase (160 aa).

Residues Leu78, Gly100, Ile122, and Ser130 each contribute to the S-adenosyl-L-methionine site.

Belongs to the class IV-like SAM-binding methyltransferase superfamily. RNA methyltransferase TrmH family. TrmL subfamily. In terms of assembly, homodimer.

It is found in the cytoplasm. The catalysed reaction is cytidine(34) in tRNA + S-adenosyl-L-methionine = 2'-O-methylcytidine(34) in tRNA + S-adenosyl-L-homocysteine + H(+). The enzyme catalyses 5-carboxymethylaminomethyluridine(34) in tRNA(Leu) + S-adenosyl-L-methionine = 5-carboxymethylaminomethyl-2'-O-methyluridine(34) in tRNA(Leu) + S-adenosyl-L-homocysteine + H(+). Methylates the ribose at the nucleotide 34 wobble position in the two leucyl isoacceptors tRNA(Leu)(CmAA) and tRNA(Leu)(cmnm5UmAA). Catalyzes the methyl transfer from S-adenosyl-L-methionine to the 2'-OH of the wobble nucleotide. This is tRNA (cytidine(34)-2'-O)-methyltransferase from Haemophilus influenzae (strain ATCC 51907 / DSM 11121 / KW20 / Rd).